Here is a 229-residue protein sequence, read N- to C-terminus: MPKKKALTPLPYLASIVFLPWWISISFNKSLEPWVTNWWNTRQSETFLNDIQEKNVLERFIELEQLFLLDEMIKEYPGTQIQKLRIGIHKETIQLVKMHNEDHIHIILHFSTNIICFAILSGYSILGNEELVILNSWVQEFLYNLSDTIKAFSILLLTDLCIGFHSPHGWELMIGSVYKDFGFAHNDQIISGLVSTFPVILDTILKYWIFHYLNRVSPSLVVVYHSMNE.

Transmembrane regions (helical) follow at residues 7 to 27 (LTPL…SISF), 106 to 126 (IILH…YSIL), and 189 to 209 (IISG…KYWI).

The protein belongs to the CemA family.

It is found in the plastid. It localises to the chloroplast inner membrane. The enzyme catalyses K(+)(in) + H(+)(out) = K(+)(out) + H(+)(in). Its function is as follows. Contributes to K(+)/H(+) antiport activity by supporting proton efflux to control proton extrusion and homeostasis in chloroplasts in a light-dependent manner to modulate photosynthesis. Prevents excessive induction of non-photochemical quenching (NPQ) under continuous-light conditions. Indirectly promotes efficient inorganic carbon uptake into chloroplasts. The polypeptide is Potassium/proton antiporter CemA (Liriodendron tulipifera (Tuliptree)).